Reading from the N-terminus, the 116-residue chain is Large ribosomal subunit protein bL20c (116 aa).

Belongs to the bacterial ribosomal protein bL20 family.

Its subcellular location is the plastid. It localises to the chloroplast. Its function is as follows. Binds directly to 23S ribosomal RNA and is necessary for the in vitro assembly process of the 50S ribosomal subunit. It is not involved in the protein synthesizing functions of that subunit. The sequence is that of Large ribosomal subunit protein bL20c from Rhodomonas salina (Cryptomonas salina).